Consider the following 156-residue polypeptide: Small ribosomal subunit protein uS7 (156 aa).

The protein belongs to the universal ribosomal protein uS7 family. Part of the 30S ribosomal subunit. Contacts proteins S9 and S11.

In terms of biological role, one of the primary rRNA binding proteins, it binds directly to 16S rRNA where it nucleates assembly of the head domain of the 30S subunit. Is located at the subunit interface close to the decoding center, probably blocks exit of the E-site tRNA. The protein is Small ribosomal subunit protein uS7 of Streptococcus gordonii (strain Challis / ATCC 35105 / BCRC 15272 / CH1 / DL1 / V288).